Consider the following 359-residue polypeptide: UDP-3-O-acylglucosamine N-acyltransferase (359 aa).

The active-site Proton acceptor is the histidine 247.

It belongs to the transferase hexapeptide repeat family. LpxD subfamily. Homotrimer.

It catalyses the reaction a UDP-3-O-[(3R)-3-hydroxyacyl]-alpha-D-glucosamine + a (3R)-hydroxyacyl-[ACP] = a UDP-2-N,3-O-bis[(3R)-3-hydroxyacyl]-alpha-D-glucosamine + holo-[ACP] + H(+). The protein operates within bacterial outer membrane biogenesis; LPS lipid A biosynthesis. Its function is as follows. Catalyzes the N-acylation of UDP-3-O-acylglucosamine using 3-hydroxyacyl-ACP as the acyl donor. Is involved in the biosynthesis of lipid A, a phosphorylated glycolipid that anchors the lipopolysaccharide to the outer membrane of the cell. The sequence is that of UDP-3-O-acylglucosamine N-acyltransferase from Chlorobium chlorochromatii (strain CaD3).